Consider the following 546-residue polypeptide: MKRNGIVSALCFIGFLAAEAPDISVAEALVLLSILFFVPGIFPFVFRQSPVRAAQFMENGLIQCYPVAAFFAVLALVTEVGGFALIWWMYTVFNALYAILRLWETKIHRIEETSVLFGLIYLAGGGFWFFAYAAHLQIMQFGPLIILLTAVHFHYSAFLIPIFNGLLGRTIRKHRMLYSWITWVILLSPLLIALGITYSKTLDVIAVSIYMAAIYLHAFLVFTAAFRTKTGTFLIRLSSAVLMITIAFSMIYSFGVFRQEVTLTINQMIWIHGFVNAFGVILPALIGWRIEDAKPFDADSVKTFSRIYGKRKIGEEFLANIQAENNARYSGLVDDMGSLRSKDFSPEKLAPLILSFYEQTIEYNIKAKVTWSTWFRPLAIIYEWFSRRIGQIHLSTNPDWYRMYSKIKGVHSKKDGRERVRAWIRTNEKNETIFTALYSVYRSNGEGYMNISLPLPFSSMTGILKPYHHQEKLVLTSRRRKSRAGDEGIYLQTRAGTCPLPLSETFLIEAVHDNKLTAVHHMWLFGIKFLTVHYSITHINQPIERT.

Transmembrane regions (helical) follow at residues 27-46, 59-78, 83-100, 114-134, 143-163, 176-196, 204-224, 237-257, and 268-288; these read EALVLLSILFFVPGIFPFVF, NGLIQCYPVAAFFAVLALVT, FALIWWMYTVFNALYAIL, SVLFGLIYLAGGGFWFFAYAA, PLIILLTAVHFHYSAFLIPIF, MLYSWITWVILLSPLLIALGI, VIAVSIYMAAIYLHAFLVFTA, LSSAVLMITIAFSMIYSFGVF, and MIWIHGFVNAFGVILPALIGW.

It localises to the cell membrane. This is an uncharacterized protein from Bacillus subtilis (strain 168).